The following is a 1009-amino-acid chain: Glutamate receptor ionotropic, delta-2 (1009 aa).

An N-terminal signal peptide occupies residues 1-23; the sequence is MKVFPAVLFLITFWSLEWEPVLP. The Extracellular portion of the chain corresponds to 24-566; that stretch reads DSIIHIGAIF…DMFACLAPFD (543 aa). 4 N-linked (GlcNAc...) asparagine glycosylation sites follow: N293, N306, N390, and N426. Residues E531, V534, and D535 each contribute to the Ca(2+) site. A helical membrane pass occupies residues 567–587; that stretch reads LSLWACIAGTVLLVGTLVYLL. The Cytoplasmic segment spans residues 588–635; it reads NWLNPPRLPMGSVSSTTLYNSMWFVYGSFVQQGGEVPYTTLATRMMMG. The chain crosses the membrane as a helical span at residues 636-656; sequence VWWLFALIVISSYTANLAAFL. Residues 657–830 are Extracellular-facing; it reads TISRIENSIQ…KSGSALDIHS (174 aa). N-linked (GlcNAc...) asparagine glycosylation occurs at N713. Ca(2+) is bound by residues D753, D755, and S757. A helical membrane pass occupies residues 831 to 851; it reads FAGVFFVLAAGVVLSCLIATV. At 852 to 1009 the chain is on the cytoplasmic side; sequence ETWWTRRKGS…GNDPDRGTSI (158 aa). Residues 989–1009 are disordered; that stretch reads YQPTPAPNFSYGNDPDRGTSI.

The protein belongs to the glutamate-gated ion channel (TC 1.A.10.1) family. GRID2 subfamily. In terms of assembly, tetramer; dimer of dimers. In terms of tissue distribution, expressed in cerebellar Purkinje cells, in crest cells in the medial octavolateral nucleus and in type I neurons of the optic tectum.

The protein resides in the postsynaptic cell membrane. It carries out the reaction Ca(2+)(in) = Ca(2+)(out). The catalysed reaction is Na(+)(in) = Na(+)(out). Its function is as follows. Member of the ionotropic glutamate receptor family, which plays a crucial role in synaptic organization and signal transduction in the central nervous system. Although it shares structural features with ionotropic glutamate receptors, does not bind glutamate as a primary ligand. Promotes synaptogenesis and mediates the D-Serine-dependent long term depression signals and AMPA receptor endocytosis of cerebellar parallel fiber-Purkinje cell (PF-PC) synapses through the NRX1B-CBLN1-GRID2 triad complex. In the presence of neurexins and cerebellins, forms cation-selective channels that are proposed to be gated by glycine and D-serine. However, recent research disputes this ligand-gated cation channel activity. Cation-selective ion channel activity can be triggered by GRM1 in Purkinje cells. This chain is Glutamate receptor ionotropic, delta-2, found in Danio rerio (Zebrafish).